A 488-amino-acid chain; its full sequence is Ribulose bisphosphate carboxylase large chain (488 aa).

Substrate contacts are provided by asparagine 127 and threonine 177. Residue lysine 179 is the Proton acceptor of the active site. Position 181 (lysine 181) interacts with substrate. Residues lysine 205, aspartate 207, and glutamate 208 each contribute to the Mg(2+) site. At lysine 205 the chain carries N6-carboxylysine. Histidine 297 acts as the Proton acceptor in catalysis. Substrate-binding residues include arginine 298, histidine 330, and serine 382.

It belongs to the RuBisCO large chain family. Type I subfamily. In terms of assembly, heterohexadecamer of 8 large chains and 8 small chains. The cofactor is Mg(2+).

The protein resides in the plastid. It is found in the chloroplast. The enzyme catalyses 2 (2R)-3-phosphoglycerate + 2 H(+) = D-ribulose 1,5-bisphosphate + CO2 + H2O. It catalyses the reaction D-ribulose 1,5-bisphosphate + O2 = 2-phosphoglycolate + (2R)-3-phosphoglycerate + 2 H(+). In terms of biological role, ruBisCO catalyzes two reactions: the carboxylation of D-ribulose 1,5-bisphosphate, the primary event in carbon dioxide fixation, as well as the oxidative fragmentation of the pentose substrate in the photorespiration process. Both reactions occur simultaneously and in competition at the same active site. This is Ribulose bisphosphate carboxylase large chain from Cyanidioschyzon merolae (strain NIES-3377 / 10D) (Unicellular red alga).